A 225-amino-acid chain; its full sequence is MNSIEFPLLDRTTQNSVISTTSNDLSNWSRLSSLWPLLYGTSCCFIEFASLIGSRFDFDRYGLVPRSSPRQADLILTAGTVTMKMAPSLVRLYEQMPEPKYVIAMGACTITGGMFSTDSYSTVRGVDKLIPVDVYLPGCPPKPEAVIDAITKLRKKISREIYEDRIRSQQENRCFTTNHKFHVGRSTHTGNYDQRLLYQSPSTSEIPLETFFKYKSSVSSPEFVN.

[4Fe-4S] cluster-binding residues include Cys-43, Cys-44, Cys-108, and Cys-139.

Belongs to the complex I 20 kDa subunit family. NDH is composed of at least 16 different subunits, 5 of which are encoded in the nucleus. [4Fe-4S] cluster serves as cofactor.

It localises to the plastid. Its subcellular location is the chloroplast thylakoid membrane. The catalysed reaction is a plastoquinone + NADH + (n+1) H(+)(in) = a plastoquinol + NAD(+) + n H(+)(out). The enzyme catalyses a plastoquinone + NADPH + (n+1) H(+)(in) = a plastoquinol + NADP(+) + n H(+)(out). NDH shuttles electrons from NAD(P)H:plastoquinone, via FMN and iron-sulfur (Fe-S) centers, to quinones in the photosynthetic chain and possibly in a chloroplast respiratory chain. The immediate electron acceptor for the enzyme in this species is believed to be plastoquinone. Couples the redox reaction to proton translocation, and thus conserves the redox energy in a proton gradient. This chain is NAD(P)H-quinone oxidoreductase subunit K, chloroplastic, found in Vitis vinifera (Grape).